An 803-amino-acid polypeptide reads, in one-letter code: Pre-mRNA-splicing factor SYF1 (803 aa).

13 HAT repeats span residues Glu-3–Arg-34, Asp-35–Arg-67, Ala-79–Arg-111, Gly-113–Glu-147, Val-393–Asp-425, Gly-427–Lys-463, Asp-482–Ala-519, Glu-525–Asp-557, Gly-559–Lys-593, Leu-596–Asp-631, Gly-633–Gln-668, Leu-670–Gly-704, and Val-708–Arg-740.

Belongs to the crooked-neck family. Associated with the spliceosome.

Its subcellular location is the nucleus. Involved in pre-mRNA splicing and cell cycle progression. This is Pre-mRNA-splicing factor SYF1 (SYF1) from Eremothecium gossypii (strain ATCC 10895 / CBS 109.51 / FGSC 9923 / NRRL Y-1056) (Yeast).